Reading from the N-terminus, the 559-residue chain is Urocanate hydratase (559 aa).

NAD(+)-binding positions include 54-55 (GG), Gln-132, 178-180 (GMG), Glu-198, Arg-203, 244-245 (NA), 265-269 (QTSAH), 275-276 (YL), and Tyr-324. Cys-412 is a catalytic residue. NAD(+) is bound at residue Gly-494.

This sequence belongs to the urocanase family. It depends on NAD(+) as a cofactor.

It is found in the cytoplasm. It catalyses the reaction 4-imidazolone-5-propanoate = trans-urocanate + H2O. It participates in amino-acid degradation; L-histidine degradation into L-glutamate; N-formimidoyl-L-glutamate from L-histidine: step 2/3. Its function is as follows. Catalyzes the conversion of urocanate to 4-imidazolone-5-propionate. This is Urocanate hydratase from Azotobacter vinelandii (strain DJ / ATCC BAA-1303).